A 58-amino-acid polypeptide reads, in one-letter code: Small ribosomal subunit protein bS21 (58 aa).

This sequence belongs to the bacterial ribosomal protein bS21 family.

In Lactobacillus acidophilus (strain ATCC 700396 / NCK56 / N2 / NCFM), this protein is Small ribosomal subunit protein bS21.